The primary structure comprises 110 residues: UPF0060 membrane protein SACE_5620 (110 aa).

4 helical membrane passes run 8–28 (VVLF…VWQG), 34–54 (GLLW…VATF), 63–83 (ILAA…VVVD), and 89–109 (RWDL…MYAP).

Belongs to the UPF0060 family.

It is found in the cell membrane. This is UPF0060 membrane protein SACE_5620 from Saccharopolyspora erythraea (strain ATCC 11635 / DSM 40517 / JCM 4748 / NBRC 13426 / NCIMB 8594 / NRRL 2338).